Here is a 145-residue protein sequence, read N- to C-terminus: Small ribosomal subunit protein uS17c (145 aa).

The N-terminal 36 residues, Met-1–Ala-36, are a transit peptide targeting the chloroplast. Positions Lys-101–Asp-145 are disordered. Over residues Gln-120 to Gln-136 the composition is skewed to low complexity.

This sequence belongs to the universal ribosomal protein uS17 family. As to quaternary structure, part of the 30S ribosomal subunit.

The protein resides in the plastid. It is found in the chloroplast. In terms of biological role, one of the primary rRNA binding proteins, it binds specifically to the 5'-end of 16S ribosomal RNA. The protein is Small ribosomal subunit protein uS17c (RPS17) of Oryza sativa subsp. japonica (Rice).